Here is a 161-residue protein sequence, read N- to C-terminus: ATP synthase subunit b 2 (161 aa).

A helical transmembrane segment spans residues 13 to 33 (IVWLVIALVAMYFVMSRLAIP).

It belongs to the ATPase B chain family. F-type ATPases have 2 components, F(1) - the catalytic core - and F(0) - the membrane proton channel. F(1) has five subunits: alpha(3), beta(3), gamma(1), delta(1), epsilon(1). F(0) has three main subunits: a(1), b(2) and c(10-14). The alpha and beta chains form an alternating ring which encloses part of the gamma chain. F(1) is attached to F(0) by a central stalk formed by the gamma and epsilon chains, while a peripheral stalk is formed by the delta and b chains.

The protein resides in the cell inner membrane. Its function is as follows. F(1)F(0) ATP synthase produces ATP from ADP in the presence of a proton or sodium gradient. F-type ATPases consist of two structural domains, F(1) containing the extramembraneous catalytic core and F(0) containing the membrane proton channel, linked together by a central stalk and a peripheral stalk. During catalysis, ATP synthesis in the catalytic domain of F(1) is coupled via a rotary mechanism of the central stalk subunits to proton translocation. In terms of biological role, component of the F(0) channel, it forms part of the peripheral stalk, linking F(1) to F(0). The b'-subunit is a diverged and duplicated form of b found in plants and photosynthetic bacteria. This chain is ATP synthase subunit b 2 (atpF2), found in Rhodospirillum rubrum (strain ATCC 11170 / ATH 1.1.1 / DSM 467 / LMG 4362 / NCIMB 8255 / S1).